Here is a 460-residue protein sequence, read N- to C-terminus: Proline--tRNA ligase (460 aa).

The protein belongs to the class-II aminoacyl-tRNA synthetase family. ProS type 3 subfamily. As to quaternary structure, homodimer.

It is found in the cytoplasm. The catalysed reaction is tRNA(Pro) + L-proline + ATP = L-prolyl-tRNA(Pro) + AMP + diphosphate. In terms of biological role, catalyzes the attachment of proline to tRNA(Pro) in a two-step reaction: proline is first activated by ATP to form Pro-AMP and then transferred to the acceptor end of tRNA(Pro). This chain is Proline--tRNA ligase, found in Methanococcus maripaludis (strain C7 / ATCC BAA-1331).